Consider the following 586-residue polypeptide: Aspartate--tRNA(Asp/Asn) ligase (586 aa).

Position 172 (E172) interacts with L-aspartate. The interval 196 to 199 (QLYK) is aspartate. Position 218 (R218) interacts with L-aspartate. Residues 218-220 (RDE) and Q227 contribute to the ATP site. H446 is a binding site for L-aspartate. E480 lines the ATP pocket. R487 contributes to the L-aspartate binding site. 532–535 (GIDR) contacts ATP.

The protein belongs to the class-II aminoacyl-tRNA synthetase family. Type 1 subfamily. As to quaternary structure, homodimer.

The protein localises to the cytoplasm. It catalyses the reaction tRNA(Asx) + L-aspartate + ATP = L-aspartyl-tRNA(Asx) + AMP + diphosphate. Its function is as follows. Aspartyl-tRNA synthetase with relaxed tRNA specificity since it is able to aspartylate not only its cognate tRNA(Asp) but also tRNA(Asn). Reaction proceeds in two steps: L-aspartate is first activated by ATP to form Asp-AMP and then transferred to the acceptor end of tRNA(Asp/Asn). This Borreliella burgdorferi (strain ATCC 35210 / DSM 4680 / CIP 102532 / B31) (Borrelia burgdorferi) protein is Aspartate--tRNA(Asp/Asn) ligase.